The chain runs to 395 residues: Elongation factor Tu (395 aa).

A tr-type G domain is found at 10-204 (KPHVNIGTIG…AVDEYIPTPQ (195 aa)). Positions 19 to 26 (GHVDHGKT) are G1. GTP is bound at residue 19-26 (GHVDHGKT). Threonine 26 is a binding site for Mg(2+). Positions 60–64 (GITIS) are G2. Residues 81-84 (DCPG) form a G3 region. Residues 81 to 85 (DCPGH) and 136 to 139 (NKCD) each bind GTP. The tract at residues 136–139 (NKCD) is G4. A G5 region spans residues 174-176 (SAL).

It belongs to the TRAFAC class translation factor GTPase superfamily. Classic translation factor GTPase family. EF-Tu/EF-1A subfamily. As to quaternary structure, monomer.

It is found in the cytoplasm. It catalyses the reaction GTP + H2O = GDP + phosphate + H(+). GTP hydrolase that promotes the GTP-dependent binding of aminoacyl-tRNA to the A-site of ribosomes during protein biosynthesis. This chain is Elongation factor Tu, found in Geobacillus kaustophilus (strain HTA426).